The primary structure comprises 180 residues: 3-hydroxyanthranilate 3,4-dioxygenase (180 aa).

R46 provides a ligand contact to O2. H50, E56, and H94 together coordinate Fe cation. E56 is a substrate binding site. Residues R98 and E109 each coordinate substrate. Residues C124, C127, C161, and C164 each coordinate Fe cation.

This sequence belongs to the 3-HAO family. In terms of assembly, homodimer. It depends on Fe(2+) as a cofactor.

It catalyses the reaction 3-hydroxyanthranilate + O2 = (2Z,4Z)-2-amino-3-carboxymuconate 6-semialdehyde. Its pathway is cofactor biosynthesis; NAD(+) biosynthesis; quinolinate from L-kynurenine: step 3/3. Catalyzes the oxidative ring opening of 3-hydroxyanthranilate to 2-amino-3-carboxymuconate semialdehyde, which spontaneously cyclizes to quinolinate. The chain is 3-hydroxyanthranilate 3,4-dioxygenase from Jannaschia sp. (strain CCS1).